Reading from the N-terminus, the 407-residue chain is Steroid 3-ketoacyl-CoA thiolase FadA6 (407 aa).

Cys110 (acyl-thioester intermediate) is an active-site residue. Residues Gln178, 237 to 239 (RES), and Ser262 each bind CoA. Active-site proton acceptor residues include His363 and Cys393. Residue Gly395 participates in substrate binding.

It belongs to the thiolase-like superfamily. Thiolase family.

The enzyme catalyses an acyl-CoA + acetyl-CoA = a 3-oxoacyl-CoA + CoA. The catalysed reaction is 6-methyl-3,7-dioxodecanedioyl-CoA + CoA = 4-methyl-5-oxo-octanedioyl-CoA + acetyl-CoA. Its pathway is steroid metabolism; cholesterol degradation. May be involved in the final steps of cholesterol and steroid degradation. Catalyzes the formation of 4-methyl-5-oxo-octanedioyl-CoA (MOODA-CoA) and acetyl-CoA from 6-methyl-3,7-dioxodecanedioyl-CoA (MeDODA-CoA) and coenzyme A. This Mycobacterium tuberculosis (strain ATCC 25618 / H37Rv) protein is Steroid 3-ketoacyl-CoA thiolase FadA6.